The primary structure comprises 200 residues: Holliday junction branch migration complex subunit RuvA (200 aa).

The domain I stretch occupies residues 1 to 63; that stretch reads MIASVRGVVT…EDSLTLYGFA (63 aa). The domain II stretch occupies residues 64 to 142; sequence DDDAKALFEL…PVPVGADSAA (79 aa). Residues 143–151 are flexible linker; that stretch reads GVTTGAWPE. The segment at 151–200 is domain III; sequence EQVRQALVGLGWTAAQADQAVTAVAETVDGAVPPVPVLLRQAIRLLGRTR.

The protein belongs to the RuvA family. Homotetramer. Forms an RuvA(8)-RuvB(12)-Holliday junction (HJ) complex. HJ DNA is sandwiched between 2 RuvA tetramers; dsDNA enters through RuvA and exits via RuvB. An RuvB hexamer assembles on each DNA strand where it exits the tetramer. Each RuvB hexamer is contacted by two RuvA subunits (via domain III) on 2 adjacent RuvB subunits; this complex drives branch migration. In the full resolvosome a probable DNA-RuvA(4)-RuvB(12)-RuvC(2) complex forms which resolves the HJ.

It localises to the cytoplasm. Its function is as follows. The RuvA-RuvB-RuvC complex processes Holliday junction (HJ) DNA during genetic recombination and DNA repair, while the RuvA-RuvB complex plays an important role in the rescue of blocked DNA replication forks via replication fork reversal (RFR). RuvA specifically binds to HJ cruciform DNA, conferring on it an open structure. The RuvB hexamer acts as an ATP-dependent pump, pulling dsDNA into and through the RuvAB complex. HJ branch migration allows RuvC to scan DNA until it finds its consensus sequence, where it cleaves and resolves the cruciform DNA. The protein is Holliday junction branch migration complex subunit RuvA of Salinispora tropica (strain ATCC BAA-916 / DSM 44818 / JCM 13857 / NBRC 105044 / CNB-440).